Consider the following 437-residue polypeptide: MPIIRKIHARQILDSRGNPTVEVDVYTESSFGRAAVPSGASTGVHEAVELRDGDASVYLGKGVLKAVENVNTIVDEGLRGMLVTEQEEIDRMLLELDGTPNKSKLGANALLGVSLACAKAGAEYSGMSLYRYIGGTMANTLPVPMMNVINGGAHADNTVDFQEFMIMPIGFTSYSDALRCGAEIFHALKALLKSRGLSTAVGDEGGFAPNLTSNEEAIELVVEAIGKAGYKAGSPASKGGLGEGQVMIALDPASSEFYDADKKKYVFKKSDKRELSSEEMAAYWEKWSNDYPIISIEDGMAEDDWAGWKMLTDRIGSRVQLVGDDLFVTNSVRLAEGIEKKVGNSILVKVNQIGTLTETLEAIDLAKRNGYTAVISHRSGETEDSTIAQIAVATNAGQIKTGSMSRSDRMAKYNELLRIEEELGAQAVYPAAKAFRV.

Residue glutamine 162 participates in (2R)-2-phosphoglycerate binding. The Proton donor role is filled by glutamate 204. Mg(2+)-binding residues include aspartate 251, glutamate 297, and aspartate 324. Positions 349, 378, 379, and 400 each coordinate (2R)-2-phosphoglycerate. Catalysis depends on lysine 349, which acts as the Proton acceptor.

Belongs to the enolase family. Mg(2+) is required as a cofactor.

It localises to the cytoplasm. It is found in the secreted. Its subcellular location is the cell surface. It catalyses the reaction (2R)-2-phosphoglycerate = phosphoenolpyruvate + H2O. The protein operates within carbohydrate degradation; glycolysis; pyruvate from D-glyceraldehyde 3-phosphate: step 4/5. Its function is as follows. Catalyzes the reversible conversion of 2-phosphoglycerate (2-PG) into phosphoenolpyruvate (PEP). It is essential for the degradation of carbohydrates via glycolysis. This chain is Enolase, found in Chlorobium phaeovibrioides (strain DSM 265 / 1930) (Prosthecochloris vibrioformis (strain DSM 265)).